We begin with the raw amino-acid sequence, 415 residues long: Peptide chain release factor subunit 1 (415 aa).

Belongs to the eukaryotic release factor 1 family. As to quaternary structure, heterodimer of two subunits, one of which binds GTP.

The protein localises to the cytoplasm. Its function is as follows. Directs the termination of nascent peptide synthesis (translation) in response to the termination codons UAA, UAG and UGA. The chain is Peptide chain release factor subunit 1 from Thermococcus onnurineus (strain NA1).